The sequence spans 446 residues: N-succinylarginine dihydrolase (446 aa).

Residues 21–30 (AGLSWGNVAS), Asn112, and 139–140 (HR) contribute to the substrate site. Glu176 is a catalytic residue. Substrate is bound at residue Arg216. The active site involves His252. Asp254 and Asn364 together coordinate substrate. The Nucleophile role is filled by Cys370.

This sequence belongs to the succinylarginine dihydrolase family. As to quaternary structure, homodimer.

It catalyses the reaction N(2)-succinyl-L-arginine + 2 H2O + 2 H(+) = N(2)-succinyl-L-ornithine + 2 NH4(+) + CO2. It functions in the pathway amino-acid degradation; L-arginine degradation via AST pathway; L-glutamate and succinate from L-arginine: step 2/5. In terms of biological role, catalyzes the hydrolysis of N(2)-succinylarginine into N(2)-succinylornithine, ammonia and CO(2). The chain is N-succinylarginine dihydrolase from Marinobacter nauticus (strain ATCC 700491 / DSM 11845 / VT8) (Marinobacter aquaeolei).